The primary structure comprises 815 residues: Protein pygopus (815 aa).

2 disordered regions span residues 1–107 (MTHN…QVSA) and 147–711 (GMGG…GPMG). The short motif at 39-45 (PKKRRKT) is the Nuclear localization signal element. A compositionally biased stretch (low complexity) spans 46–73 (SSAANSAAAVAAAAAAAAAANSMQQQQA). A compositionally biased stretch (pro residues) spans 74 to 86 (PPTPQDLLPPPPM). The span at 188–199 (RGMSPMHPHQMG) shows a compositional bias: low complexity. Gly residues-rich tracts occupy residues 230 to 248 (PMGG…GMGG) and 257 to 269 (GMGG…GGPN). Residues 307–316 (LGPPSGPGPG) are compositionally biased toward pro residues. Composition is skewed to low complexity over residues 323-341 (GPQQ…NGQM), 407-424 (SNNN…NQNP), 444-478 (PSVS…VPTS), and 495-545 (GPSP…HQQH). Over residues 569-580 (PQQPSHLGPPHP) the composition is skewed to pro residues. A compositionally biased stretch (gly residues) spans 602-621 (GGPGMHGGPAGMPPHMGGGP). Residues 622–636 (NPHMMGGPHGNAGPH) show a composition bias toward low complexity. Positions 640–656 (GHMGGVPGPGPGPGGMN) are enriched in gly residues. The segment covering 663 to 675 (MSPHHGHPHHHHN) has biased composition (basic residues). The segment covering 678 to 711 (GGPGPNMFGGGGGGPMGPGGPMGNMGPMGGGPMG) has biased composition (gly residues). A PHD-type zinc finger spans residues 747–805 (IYPCGMCHKEVNDNDEAVFCESGCNFFFHRTCVGLTEAAFQMLNKEVFAEWCCDKCVSS).

In terms of assembly, binds to BCL9 via the PHD-type zinc finger motif, and thereby becomes part of the nuclear ARM/PAN complex. Ubiquitous throughout embryogenesis and larval development.

The protein resides in the nucleus. Its function is as follows. Involved in signal transduction through the Wnt pathway. The polypeptide is Protein pygopus (pygo) (Drosophila melanogaster (Fruit fly)).